The chain runs to 317 residues: Apolipoprotein E (317 aa).

The N-terminal stretch at 1–18 is a signal peptide; it reads MKVLWAALLVTFLAGCQA. Repeat copies occupy residues 80–101, 102–123, 124–145, 146–167, 168–189, 190–211, 212–233, and 234–255. The interval 80–255 is 8 X 22 AA approximate tandem repeats; sequence ALMDETMKEL…RLDEVKEQVA (176 aa). Position 143 is a methionine sulfoxide (M143). The residue at position 147 (S147) is a Phosphoserine. An LDL and other lipoprotein receptors binding region spans residues 158-168; that stretch reads HLRKLRKRLLR. 162–165 is a binding site for heparin; the sequence is LRKR. The tract at residues 210–290 is lipid-binding and lipoprotein association; sequence AATVGSLAGQ…SWFEPLVEDM (81 aa). Heparin is bound at residue 229–236; it reads GERLRARM. Positions 266–317 are homooligomerization; sequence QQIRLQAEAFQARLKSWFEPLVEDMQRQWAGLVEKVQAAMGTSAAPVPSDNH. The specificity for association with VLDL stretch occupies residues 278–290; the sequence is RLKSWFEPLVEDM.

The protein belongs to the apolipoprotein A1/A4/E family. As to quaternary structure, homotetramer. May interact with ABCA1; functionally associated with ABCA1 in the biogenesis of HDLs. May interact with APP/A4 amyloid-beta peptide; the interaction is extremely stable in vitro but its physiological significance is unclear. May interact with MAPT. May interact with MAP2. In the cerebrospinal fluid, interacts with secreted SORL1. Interacts with PMEL; this allows the loading of PMEL luminal fragment on ILVs to induce fibril nucleation. In terms of processing, APOE exists as multiple glycosylated and sialylated glycoforms within cells and in plasma. The extent of glycosylation and sialylation are tissue and context specific. Glycated in plasma VLDL. Post-translationally, phosphorylated by FAM20C in the extracellular medium.

The protein localises to the secreted. The protein resides in the extracellular space. It localises to the extracellular matrix. Its subcellular location is the extracellular vesicle. It is found in the endosome. The protein localises to the multivesicular body. Functionally, APOE is an apolipoprotein, a protein associating with lipid particles, that mainly functions in lipoprotein-mediated lipid transport between organs via the plasma and interstitial fluids. APOE is a core component of plasma lipoproteins and is involved in their production, conversion and clearance. Apolipoproteins are amphipathic molecules that interact both with lipids of the lipoprotein particle core and the aqueous environment of the plasma. As such, APOE associates with chylomicrons, chylomicron remnants, very low density lipoproteins (VLDL) and intermediate density lipoproteins (IDL) but shows a preferential binding to high-density lipoproteins (HDL). It also binds a wide range of cellular receptors including the LDL receptor/LDLR, the LDL receptor-related proteins LRP1, LRP2 and LRP8 and the very low-density lipoprotein receptor/VLDLR that mediate the cellular uptake of the APOE-containing lipoprotein particles. Finally, APOE also has a heparin-binding activity and binds heparan-sulfate proteoglycans on the surface of cells, a property that supports the capture and the receptor-mediated uptake of APOE-containing lipoproteins by cells. A main function of APOE is to mediate lipoprotein clearance through the uptake of chylomicrons, VLDLs, and HDLs by hepatocytes. APOE is also involved in the biosynthesis by the liver of VLDLs as well as their uptake by peripheral tissues ensuring the delivery of triglycerides and energy storage in muscle, heart and adipose tissues. By participating in the lipoprotein-mediated distribution of lipids among tissues, APOE plays a critical role in plasma and tissues lipid homeostasis. APOE is also involved in two steps of reverse cholesterol transport, the HDLs-mediated transport of cholesterol from peripheral tissues to the liver, and thereby plays an important role in cholesterol homeostasis. First, it is functionally associated with ABCA1 in the biogenesis of HDLs in tissues. Second, it is enriched in circulating HDLs and mediates their uptake by hepatocytes. APOE also plays an important role in lipid transport in the central nervous system, regulating neuron survival and sprouting. The chain is Apolipoprotein E (APOE) from Pan troglodytes (Chimpanzee).